The sequence spans 632 residues: Cell pattern formation-associated protein stuA (632 aa).

The span at 1–20 shows a compositional bias: polar residues; it reads MNQTQSYMDVHTSHFSSPQP. Positions 1-27 are disordered; it reads MNQTQSYMDVHTSHFSSPQPYGSHGAT. Residues 128–234 enclose the HTH APSES-type domain; that stretch reads RVTATLWEDE…HNIGGLLYHP (107 aa). The segment at residues 162-183 is a DNA-binding region (H-T-H motif); the sequence is GTKLLNVAGMTRGRRDGILKSE. Disordered stretches follow at residues 246-315, 340-386, 403-460, and 473-632; these read DSQQ…ASSL, QNVP…KSYY, AHSL…QQEP, and NRNS…MRRR. Composition is skewed to polar residues over residues 254–264, 275–295, 340–354, and 364–376; these read GSQTARTSQGP, MNGS…QTNG, QNVP…TRSM, and GNNL…YQNQ. The segment covering 377–386 has biased composition (low complexity); sequence PAYDSSKSYY. A compositionally biased stretch (basic and acidic residues) spans 428–438; the sequence is EQEHDEVKVDR. The segment covering 473–506 has biased composition (polar residues); it reads NRNSYTYTTNPSVSSLSGDHSQLGGSPSHQNGSD. Positions 558 to 576 are enriched in low complexity; that stretch reads AYASNYSGYSSVNGSSMGS. The tract at residues 578-604 is nuclear localization domain; the sequence is KRMRDDDDDHLSRSDGRENEYETKRRK. The span at 579–600 shows a compositional bias: basic and acidic residues; the sequence is RMRDDDDDHLSRSDGRENEYET.

The protein belongs to the EFG1/PHD1/stuA family.

The protein localises to the nucleus. In terms of biological role, transcription factor that regulates asexual reproduction. Binds the StuA-response elements (StRE) with the consensus sequence 5'-(A/T)CGCG(T/A)N(A/C)-3' at the promoters of target genes. Required for accurate spatial organization of the developing conidiophore. Primarily involved in the formation of the uninucleate sterigmata, which arise by budding in this multicellular structure. Required for metula and phialide formation during conidiation but is not required for dimorphic growth. This Talaromyces marneffei (Penicillium marneffei) protein is Cell pattern formation-associated protein stuA.